The primary structure comprises 548 residues: MAAKDVKFGNDARVKMLKGVNVLADAVKVTLGPKGRHVILDKSFGAPTITKDGVSVAREIELEDKFENMGAQMVKEVASKANDAAGDGTTTATVLAQAIVNEGLKAVAAGMNPMDLKRGIDKAVSAVVSELKNLSKPCETAKEIEQVGTISANSDSIVGQLISQAMEKVGKEGVITVEDGTGLEDELDVVEGMQFDRGYLSPYFINKPETATVELDNPYLLLVDKKISNIRELLPVLEGVAKAGKPLLIIAEDVEGEALATLVVNTMRGIVKVAAVKAPGFGDRRKAMLQDIAILTAGTVISEEIGMELEKATLEDLGQAKRVVINKDNTTIIDGIGDEAQIKGRVAQIRQQIEESTSDYDKEKLQERVAKLAGGVAVIKVGAATEVEMKEKKDRVDDALHATRAAVEEGIVAGGGVALVRAAAKVAASLKGDNEEQNVGIKLALRAMEAPLRQIVTNAGEEASVVASAVKNGEGNFGYNAGTEQYGDMIEMGILDPTKVTRSALQFAASVAGLMITTECMVTDLPKDDKADLGAAGMGGMGGMGGMM.

Residues 30–33, Lys-51, 87–91, Gly-415, and Asp-496 contribute to the ATP site; these read TLGP and DGTTT.

The protein belongs to the chaperonin (HSP60) family. As to quaternary structure, forms a cylinder of 14 subunits composed of two heptameric rings stacked back-to-back. Interacts with the co-chaperonin GroES.

The protein localises to the cytoplasm. It carries out the reaction ATP + H2O + a folded polypeptide = ADP + phosphate + an unfolded polypeptide.. Its function is as follows. Together with its co-chaperonin GroES, plays an essential role in assisting protein folding. The GroEL-GroES system forms a nano-cage that allows encapsulation of the non-native substrate proteins and provides a physical environment optimized to promote and accelerate protein folding. This Haemophilus influenzae (strain ATCC 51907 / DSM 11121 / KW20 / Rd) protein is Chaperonin GroEL.